The sequence spans 160 residues: Protein FrzA (160 aa).

Residues 14–155 (EQEFFCFRVG…FSKLLQTARQ (142 aa)) form the CheW-like domain.

Its function is as follows. Necessary for proper aggregation of cells to form fruiting bodies. FRZ genes define a system of signal transduction analogous to the enterobacterial chemotaxis systems. The chain is Protein FrzA (frzA) from Myxococcus xanthus.